The chain runs to 466 residues: Bifunctional NAD(P)H-hydrate repair enzyme Nnr (466 aa).

The interval 1-207 (MLSVYEKVNA…HLGVFNQIYE (207 aa)) is NAD(P)H-hydrate epimerase. A YjeF N-terminal domain is found at 8 to 207 (VNALDKRAIE…HLGVFNQIYE (200 aa)). Residues 56–60 (DNGGD) form an NADPHX 1; for epimerase activity region. The K(+) site is built by asparagine 57 and aspartate 120. The segment at 124–130 (GSHFKGK) is NADPHX 1; for epimerase activity. Aspartate 151 provides a ligand contact to (6S)-NADPHX. Residue serine 154 coordinates K(+). Residues 215–466 (LEKSDLKLPL…LDLIEKIKQL (252 aa)) form the YjeF C-terminal domain. An ADP-dependent (S)-NAD(P)H-hydrate dehydratase region spans residues 215–466 (LEKSDLKLPL…LDLIEKIKQL (252 aa)). Position 300 (glycine 300) interacts with (6S)-NADPHX. An NADPHX 2; for dehydratase activity region spans residues 342 to 348 (HPKEFLS). Residues 385–389 (KGANT) and 404–413 (SVALAKAGSG) contribute to the ADP site. Aspartate 414 is a binding site for (6S)-NADPHX.

It in the N-terminal section; belongs to the NnrE/AIBP family. The protein in the C-terminal section; belongs to the NnrD/CARKD family. The cofactor is K(+).

It catalyses the reaction (6S)-NADHX + ADP = AMP + phosphate + NADH + H(+). The catalysed reaction is (6S)-NADPHX + ADP = AMP + phosphate + NADPH + H(+). It carries out the reaction (6R)-NADHX = (6S)-NADHX. The enzyme catalyses (6R)-NADPHX = (6S)-NADPHX. Bifunctional enzyme that catalyzes the epimerization of the S- and R-forms of NAD(P)HX and the dehydration of the S-form of NAD(P)HX at the expense of ADP, which is converted to AMP. This allows the repair of both epimers of NAD(P)HX, a damaged form of NAD(P)H that is a result of enzymatic or heat-dependent hydration. The polypeptide is Bifunctional NAD(P)H-hydrate repair enzyme Nnr (nnr) (Helicobacter pylori (strain ATCC 700392 / 26695) (Campylobacter pylori)).